The sequence spans 397 residues: Phosphoglycerate kinase (397 aa).

Substrate is bound by residues 21–23, R37, 60–63, R119, and R152; these read DFN and HLGR. ATP is bound by residues K203, G294, E325, and 354–357; that span reads GGDS.

This sequence belongs to the phosphoglycerate kinase family. In terms of assembly, monomer.

Its subcellular location is the cytoplasm. It catalyses the reaction (2R)-3-phosphoglycerate + ATP = (2R)-3-phospho-glyceroyl phosphate + ADP. Its pathway is carbohydrate degradation; glycolysis; pyruvate from D-glyceraldehyde 3-phosphate: step 2/5. The protein is Phosphoglycerate kinase of Chlorobium luteolum (strain DSM 273 / BCRC 81028 / 2530) (Pelodictyon luteolum).